The sequence spans 500 residues: NAD(P)H-quinone oxidoreductase chain 4, chloroplastic (500 aa).

Helical transmembrane passes span 4-24 (FPWL…LFFL), 35-55 (YTLC…CYHF), 87-107 (FGPI…AWPV), 134-154 (LLLF…LLSM), 167-187 (FILY…GIGL), 208-228 (ALEI…SPII), 242-262 (HYST…YGLV), 272-292 (AHSI…VYAA), 305-325 (IAYS…SITD), 330-350 (GALL…FLAG), 364-384 (MGGM…LSMA), 386-406 (LALP…GIIT), 416-436 (ILIT…SLSM), and 462-482 (LFVS…PDFL).

It belongs to the complex I subunit 4 family.

It localises to the plastid. The protein resides in the chloroplast thylakoid membrane. The catalysed reaction is a plastoquinone + NADH + (n+1) H(+)(in) = a plastoquinol + NAD(+) + n H(+)(out). It carries out the reaction a plastoquinone + NADPH + (n+1) H(+)(in) = a plastoquinol + NADP(+) + n H(+)(out). This Pelargonium hortorum (Common geranium) protein is NAD(P)H-quinone oxidoreductase chain 4, chloroplastic.